We begin with the raw amino-acid sequence, 338 residues long: Glyceraldehyde-3-phosphate dehydrogenase (338 aa).

Residues 11 to 12 and Gly-111 contribute to the NAD(+) site; that span reads TI. 140-142 contributes to the D-glyceraldehyde 3-phosphate binding site; sequence SCN. Residue Cys-141 is the Nucleophile of the active site. Arg-169 contributes to the NAD(+) binding site. A D-glyceraldehyde 3-phosphate-binding site is contributed by 195–196; that stretch reads HG. Position 302 (Gln-302) interacts with NAD(+).

Belongs to the glyceraldehyde-3-phosphate dehydrogenase family. As to quaternary structure, homotetramer.

The protein resides in the cytoplasm. It carries out the reaction D-glyceraldehyde 3-phosphate + phosphate + NADP(+) = (2R)-3-phospho-glyceroyl phosphate + NADPH + H(+). It catalyses the reaction D-glyceraldehyde 3-phosphate + phosphate + NAD(+) = (2R)-3-phospho-glyceroyl phosphate + NADH + H(+). The protein operates within carbohydrate degradation; glycolysis; pyruvate from D-glyceraldehyde 3-phosphate: step 1/5. This chain is Glyceraldehyde-3-phosphate dehydrogenase (gap), found in Methanobacterium bryantii.